The following is a 337-amino-acid chain: ATP-dependent 6-phosphofructokinase (337 aa).

Residue glycine 11 participates in ATP binding. 21–25 is a binding site for ADP; that stretch reads RAVVR. ATP-binding positions include 72 to 73 and 102 to 105; these read RY and GDGS. Aspartate 103 provides a ligand contact to Mg(2+). 125 to 127 is a binding site for substrate; sequence TID. Aspartate 127 acts as the Proton acceptor in catalysis. Position 154 (arginine 154) interacts with ADP. Substrate-binding positions include arginine 162 and 169–171; that span reads MGR. ADP contacts are provided by residues 185–187, lysine 212, and 214–216; these read GAD and KNH. Substrate contacts are provided by residues glutamate 223, arginine 245, and 251-254; that span reads HILR.

Belongs to the phosphofructokinase type A (PFKA) family. ATP-dependent PFK group I subfamily. Prokaryotic clade 'B1' sub-subfamily. As to quaternary structure, homotetramer. Mg(2+) serves as cofactor.

It is found in the cytoplasm. It catalyses the reaction beta-D-fructose 6-phosphate + ATP = beta-D-fructose 1,6-bisphosphate + ADP + H(+). It functions in the pathway carbohydrate degradation; glycolysis; D-glyceraldehyde 3-phosphate and glycerone phosphate from D-glucose: step 3/4. Its activity is regulated as follows. Allosterically activated by ADP and other diphosphonucleosides, and allosterically inhibited by phosphoenolpyruvate. Its function is as follows. Catalyzes the phosphorylation of D-fructose 6-phosphate to fructose 1,6-bisphosphate by ATP, the first committing step of glycolysis. The protein is ATP-dependent 6-phosphofructokinase of Streptococcus pyogenes serotype M1.